We begin with the raw amino-acid sequence, 673 residues long: UvrABC system protein B (673 aa).

The Helicase ATP-binding domain occupies 26–183 (EGLEDGLAHQ…RRLAELQYTR (158 aa)). Residue 39–46 (GVTGSGKT) participates in ATP binding. The Beta-hairpin signature appears at 92–115 (YYDYYQPEAYVPSSDTFIEKDASV). The Helicase C-terminal domain maps to 431–597 (QVDDLLSEIR…GLNKKVVDIL (167 aa)). A UVR domain is found at 633 to 668 (QQKIHELEGQMMQHAQNLEFEEAAQIRDQLHQLREL).

It belongs to the UvrB family. In terms of assembly, forms a heterotetramer with UvrA during the search for lesions. Interacts with UvrC in an incision complex.

It is found in the cytoplasm. Its function is as follows. The UvrABC repair system catalyzes the recognition and processing of DNA lesions. A damage recognition complex composed of 2 UvrA and 2 UvrB subunits scans DNA for abnormalities. Upon binding of the UvrA(2)B(2) complex to a putative damaged site, the DNA wraps around one UvrB monomer. DNA wrap is dependent on ATP binding by UvrB and probably causes local melting of the DNA helix, facilitating insertion of UvrB beta-hairpin between the DNA strands. Then UvrB probes one DNA strand for the presence of a lesion. If a lesion is found the UvrA subunits dissociate and the UvrB-DNA preincision complex is formed. This complex is subsequently bound by UvrC and the second UvrB is released. If no lesion is found, the DNA wraps around the other UvrB subunit that will check the other stand for damage. The sequence is that of UvrABC system protein B from Salmonella heidelberg (strain SL476).